We begin with the raw amino-acid sequence, 318 residues long: Small ribosomal subunit biogenesis GTPase RsgA (318 aa).

Positions 1–16 (MTRGKPGRAGHDRRHA) are enriched in basic residues. Positions 1–21 (MTRGKPGRAGHDRRHASTGEH) are disordered. Residues 84–249 (SDQFKSKQLA…LIDSPGFQEF (166 aa)) enclose the CP-type G domain. GTP-binding positions include 133–136 (NKID) and 187–195 (GQSGMGKSS). The Zn(2+) site is built by C273, C278, H280, and C286.

Belongs to the TRAFAC class YlqF/YawG GTPase family. RsgA subfamily. As to quaternary structure, monomer. Associates with 30S ribosomal subunit, binds 16S rRNA. Zn(2+) is required as a cofactor.

The protein resides in the cytoplasm. One of several proteins that assist in the late maturation steps of the functional core of the 30S ribosomal subunit. Helps release RbfA from mature subunits. May play a role in the assembly of ribosomal proteins into the subunit. Circularly permuted GTPase that catalyzes slow GTP hydrolysis, GTPase activity is stimulated by the 30S ribosomal subunit. In Ralstonia nicotianae (strain ATCC BAA-1114 / GMI1000) (Ralstonia solanacearum), this protein is Small ribosomal subunit biogenesis GTPase RsgA.